The sequence spans 100 residues: U-myrmeciitoxin(01)-Mg7c (100 aa).

The first 17 residues, 1–17, serve as a signal peptide directing secretion; that stretch reads MKLSYLSLALAIILVLA. Residues 18 to 50 constitute a propeptide that is removed on maturation; it reads IVYSPHMEVKALADAEPDAIGFADAFGEADAEP. Serine 85 carries O-linked (GalNAc...) serine glycosylation. Threonine 94 and threonine 95 each carry an O-linked (GalNAc...) threonine glycan.

It belongs to the formicidae venom precursor-01 superfamily. Post-translationally, glycosylation is critical to maintaining the aqueous solubility of this protein, but does not directly contribute to its activity. Expressed by the venom gland.

It localises to the secreted. The protein localises to the target cell membrane. Neurotoxin that triggers pain behavior and inflammation in mammals, and is paralytic and lethal to insects. Causes a time-dependent increase in cell leak current. May act by targeting membranes. The sequence is that of U-myrmeciitoxin(01)-Mg7c from Myrmecia gulosa (Red bulldog ant).